Reading from the N-terminus, the 30-residue chain is Trypsin inhibitor 1 (30 aa).

3 disulfides stabilise this stretch: cysteine 4-cysteine 21, cysteine 11-cysteine 23, and cysteine 17-cysteine 29.

This sequence belongs to the protease inhibitor I7 (squash-type serine protease inhibitor) family.

The protein localises to the secreted. Its function is as follows. Inhibits trypsin. The chain is Trypsin inhibitor 1 from Citrullus lanatus (Watermelon).